Reading from the N-terminus, the 240-residue chain is Adapter protein MecA (240 aa).

Positions 119 to 132 (QRKQQKKNHQDKQQ) are enriched in basic and acidic residues. The interval 119-138 (QRKQQKKNHQDKQQRRAHKP) is disordered.

This sequence belongs to the MecA family. Homodimer.

Functionally, enables the recognition and targeting of unfolded and aggregated proteins to the ClpC protease or to other proteins involved in proteolysis. This is Adapter protein MecA from Staphylococcus epidermidis (strain ATCC 35984 / DSM 28319 / BCRC 17069 / CCUG 31568 / BM 3577 / RP62A).